We begin with the raw amino-acid sequence, 61 residues long: Large ribosomal subunit protein bL28 (61 aa).

The protein belongs to the bacterial ribosomal protein bL28 family.

The protein is Large ribosomal subunit protein bL28 of Nautilia profundicola (strain ATCC BAA-1463 / DSM 18972 / AmH).